The chain runs to 195 residues: 4'-phosphopantetheinyl transferase AcpT (195 aa).

Belongs to the P-Pant transferase superfamily. Gsp/Sfp/HetI/AcpT family.

The catalysed reaction is apo-[ACP] + CoA = holo-[ACP] + adenosine 3',5'-bisphosphate + H(+). May be involved in an alternative pathway for phosphopantetheinyl transfer and holo-ACP synthesis in E.coli. The native apo-protein substrate is unknown. Is able to functionally replace AcpS in vivo but only when expressed at high levels. The sequence is that of 4'-phosphopantetheinyl transferase AcpT (acpT) from Escherichia coli O157:H7.